The primary structure comprises 251 residues: Outer membrane protein assembly factor BamD (251 aa).

Residues 1-19 (MKLTKLLSALLVIGLVLGG) form the signal peptide. C20 is lipidated: N-palmitoyl cysteine. C20 is lipidated: S-diacylglycerol cysteine. 3 TPR repeats span residues 33 to 66 (IATL…HPGN), 70 to 103 (PQAE…HPAN), and 166 to 199 (AGKE…YQTT).

This sequence belongs to the BamD family. Part of the Bam complex.

Its subcellular location is the cell outer membrane. Its function is as follows. Part of the outer membrane protein assembly complex, which is involved in assembly and insertion of beta-barrel proteins into the outer membrane. The protein is Outer membrane protein assembly factor BamD of Rickettsia prowazekii (strain Madrid E).